Consider the following 244-residue polypeptide: Thiol S-methyltransferase TMT1B (244 aa).

An N-terminal signal peptide occupies residues 1-23 (MDALVLFLQLLVLLLTLPLHLLA).

It belongs to the methyltransferase superfamily.

The protein resides in the endoplasmic reticulum membrane. It localises to the lipid droplet. The protein localises to the microsome. It is found in the cytoplasm. Its subcellular location is the cytosol. It carries out the reaction a thiol + S-adenosyl-L-methionine = a methyl thioether + S-adenosyl-L-homocysteine + H(+). Thiol S-methyltransferase that catalyzes the transfer of a methyl group from S-adenosyl-L-methionine to alkyl and phenolic thiol-containing acceptor substrates. Together with TMT1B accounts for most of S-thiol methylation activity in the endoplasmic reticulum of hepatocytes. Selectively methylates S-centered nucleophiles from metabolites such as hydrogen sulfide and dithiothreitol. The sequence is that of Thiol S-methyltransferase TMT1B from Mus musculus (Mouse).